The sequence spans 413 residues: Inactive serine protease 35 (413 aa).

The first 16 residues, 1-16, serve as a signal peptide directing secretion; it reads MENMLLWLIFFTPGWT. An N-linked (GlcNAc...) asparagine glycan is attached at Asn90. One can recognise a Peptidase S1 domain in the interval 124–408; the sequence is VYGTDSRFSI…ICLWIHGNDA (285 aa). A disulfide bridge connects residues Cys154 and Cys170. Residues 191–207 are compositionally biased toward basic residues; that stretch reads MRNKSGGKKRRGSKRSR. The interval 191 to 250 is disordered; the sequence is MRNKSGGKKRRGSKRSRREASGGDQREGTREHLRERAKGGRRRKKSGRGQRIAEGRPSFQ. Residues 208–228 show a composition bias toward basic and acidic residues; it reads REASGGDQREGTREHLRERAK. Basic residues predominate over residues 229–238; it reads GGRRRKKSGR.

It belongs to the peptidase S1 family.

Its subcellular location is the secreted. This Homo sapiens (Human) protein is Inactive serine protease 35 (PRSS35).